A 458-amino-acid polypeptide reads, in one-letter code: Transcription termination factor Rho (458 aa).

The tract at residues 1 to 23 (MNTTNKESTAELNNTESNNNYNN) is disordered. Residues 10 to 23 (AELNNTESNNNYNN) are compositionally biased toward low complexity. The Rho RNA-BD domain occupies 78-153 (LIVGEGVLEV…LKVNRVNFED (76 aa)). ATP contacts are provided by residues 201–206 (GKGQRA), 213–218 (RTGKTV), and Arg-244.

It belongs to the Rho family. Homohexamer. The homohexamer assembles into an open ring structure.

Facilitates transcription termination by a mechanism that involves Rho binding to the nascent RNA, activation of Rho's RNA-dependent ATPase activity, and release of the mRNA from the DNA template. The chain is Transcription termination factor Rho from Rickettsia conorii (strain ATCC VR-613 / Malish 7).